The following is a 37-amino-acid chain: Large ribosomal subunit protein bL36 (37 aa).

It belongs to the bacterial ribosomal protein bL36 family.

The sequence is that of Large ribosomal subunit protein bL36 from Bifidobacterium adolescentis (strain ATCC 15703 / DSM 20083 / NCTC 11814 / E194a).